The sequence spans 191 residues: Probable DNA-directed RNA polymerase subunit delta (191 aa).

One can recognise an HTH HARE-type domain in the interval 14 to 83; sequence LSMIEVARAI…GENKWGLRSW (70 aa). The segment at 119-191 is disordered; that stretch reads EDAIDYRDDD…EDEEDEEPVL (73 aa).

RNAP is composed of a core of 2 alpha, a beta and a beta' subunits. The core is associated with a delta subunit and one of several sigma factors.

Participates in both the initiation and recycling phases of transcription. In the presence of the delta subunit, RNAP displays an increased specificity of transcription, a decreased affinity for nucleic acids, and an increased efficiency of RNA synthesis because of enhanced recycling. The polypeptide is Probable DNA-directed RNA polymerase subunit delta (Streptococcus pyogenes serotype M6 (strain ATCC BAA-946 / MGAS10394)).